The primary structure comprises 158 residues: Osmosensory protein A (158 aa).

Thr-2 bears the Phosphothreonine; by PknD mark. The STAS domain maps to Ala-28–Leu-139.

Belongs to the anti-sigma-factor antagonist family. In terms of assembly, interacts with Rv2638. Phosphorylation abolishes binding to Rv2638. Phosphorylated on Thr-2 by the serine/threonine-protein kinase PknD. Also phosphorylated to a lesser extent by PknB and PknE. Dephosphorylated by PstP.

With respect to regulation, regulated by PknD under osmotic stress. In terms of biological role, part of a signaling pathway that enables adaptation to osmotic stress through cell wall remodeling and virulence factor production. Unphosphorylated OprA forms a complex with the anti-anti-sigma-factor paralog Rv2638 that dissociates on OprA phosphorylation by PknD. Phosphorylation of OprA may stimulate the release of SigF from an inhibitory complex and enable the transcription of osmotically regulated genes, such as oprA and the ESX-1-associated virulence factor espA. This Mycobacterium tuberculosis (strain ATCC 25618 / H37Rv) protein is Osmosensory protein A.